The following is a 63-amino-acid chain: Small ribosomal subunit protein uS14 (63 aa).

Cysteine 26, cysteine 29, cysteine 42, and cysteine 45 together coordinate Zn(2+).

Belongs to the universal ribosomal protein uS14 family. Zinc-binding uS14 subfamily. In terms of assembly, part of the 30S ribosomal subunit. Contacts proteins S3 and S10. The cofactor is Zn(2+).

Binds 16S rRNA, required for the assembly of 30S particles and may also be responsible for determining the conformation of the 16S rRNA at the A site. The polypeptide is Small ribosomal subunit protein uS14 (Gloeobacter violaceus (strain ATCC 29082 / PCC 7421)).